The following is a 224-amino-acid chain: MKTDRVSTGSTAFDDLLGGGLERRAITQIYGEPASGKSTLCLMAAVATLRAGNSVVYIDTEGFSVERFTQIAGENAGTLADRLYLFEPLDFAQQGTMIADAEGLLKNGHAPVGLLVMDSATALYRTELDLGREAIRKLSHHMIKLLGLAKKYDIPVLITNQIYMDVERDRVAGLGGTALEHLSKAIIRLEKKDSARRAMLRKHRSRPEGLSFDFTITEDGIRTV.

It belongs to the eukaryotic RecA-like protein family. RadB subfamily.

In terms of biological role, involved in DNA repair and in homologous recombination. May regulate the cleavage reactions of the branch-structured DNA. Has a very weak ATPase activity that is not stimulated by DNA. Binds DNA but does not promote DNA strands exchange. In Methanoculleus marisnigri (strain ATCC 35101 / DSM 1498 / JR1), this protein is DNA repair and recombination protein RadB.